A 273-amino-acid chain; its full sequence is Type II pantothenate kinase (273 aa).

8-15 (DAGGTLTK) contacts ATP. Residue Glu76 is the Proton acceptor of the active site. Residues Thr105, 127–131 (GGTIM), Phe143, and Ser230 each bind ATP.

The protein belongs to the type II pantothenate kinase family. Homodimer.

It is found in the cytoplasm. The enzyme catalyses (R)-pantothenate + ATP = (R)-4'-phosphopantothenate + ADP + H(+). Its pathway is cofactor biosynthesis; coenzyme A biosynthesis; CoA from (R)-pantothenate: step 1/5. Catalyzes the phosphorylation of pantothenate (Pan), the first step in CoA biosynthesis. This chain is Type II pantothenate kinase, found in Bacillus cereus (strain ATCC 14579 / DSM 31 / CCUG 7414 / JCM 2152 / NBRC 15305 / NCIMB 9373 / NCTC 2599 / NRRL B-3711).